We begin with the raw amino-acid sequence, 225 residues long: Ribonuclease 3 (225 aa).

One can recognise an RNase III domain in the interval 7 to 129 (IPRLCRTLGY…IIGAIYLDSD (123 aa)). Glu-42 contacts Mg(2+). Asp-46 is a catalytic residue. Residues Asp-115 and Glu-118 each coordinate Mg(2+). Glu-118 is an active-site residue. The region spanning 155-225 (DPKTLLQEHL…AAQVLELIKK (71 aa)) is the DRBM domain.

This sequence belongs to the ribonuclease III family. Homodimer. Requires Mg(2+) as cofactor.

The protein localises to the cytoplasm. It catalyses the reaction Endonucleolytic cleavage to 5'-phosphomonoester.. Functionally, digests double-stranded RNA. Involved in the processing of primary rRNA transcript to yield the immediate precursors to the large and small rRNAs (23S and 16S). Processes some mRNAs, and tRNAs when they are encoded in the rRNA operon. Processes pre-crRNA and tracrRNA of type II CRISPR loci if present in the organism. This Shewanella piezotolerans (strain WP3 / JCM 13877) protein is Ribonuclease 3.